The primary structure comprises 1306 residues: Contactin-associated protein-like 5 (1306 aa).

The signal sequence occupies residues 1–24 (MDSLPRLTSVLTLLFSGLWHLGLT). Residues 25-1237 (ATNYNCDDPL…PLTNAVRSDS (1213 aa)) are Extracellular-facing. The 145-residue stretch at 30-174 (CDDPLASLLS…IGMRVEVYGC (145 aa)) folds into the F5/8 type C domain. A disulfide bond links C30 and C174. Laminin G-like domains follow at residues 180–360 (VADF…TFSC) and 367–544 (PITF…IDLC). N-linked (GlcNAc...) asparagine glycans are attached at residues N282, N355, and N496. C329 and C360 are disulfide-bonded. 3 disulfides stabilise this stretch: C512–C544, C550–C561, and C555–C570. An EGF-like 1 domain is found at 546–583 (IKDRCLPNYCEHGGSCSQSWTTFYCNCSDTSYTGATCH). The N-linked (GlcNAc...) asparagine glycan is linked to N571. C572 and C582 are disulfide-bonded. Residues 584-790 (NSIYEQSCEV…LRCYGDRRFW (207 aa)) enclose the Fibrinogen C-terminal domain. N622 carries N-linked (GlcNAc...) asparagine glycosylation. Positions 791–956 (NAVSFYTEAS…KVTSGVRPGC (166 aa)) constitute a Laminin G-like 3 domain. 5 disulfides stabilise this stretch: C929–C956, C960–C973, C967–C982, C984–C994, and C1164–C1199. An EGF-like 2 domain is found at 957 to 995 (PGHCSSYGSICHNGGKCVEKHNGYLCDCTNSPYEGPFCK). In terms of domain architecture, Laminin G-like 4 spans 1013–1199 (QEPYPVTKNI…VHGTLTESSC (187 aa)). A helical membrane pass occupies residues 1238–1258 (AVIGGVIAVVIFIIFCIIGIM). Over 1259-1306 (TRFLYQHKQSHRTSQMKEKEYPENLDSSFRNEIDLQNTVSECKREYFI) the chain is Cytoplasmic.

This sequence belongs to the neurexin family.

Its subcellular location is the membrane. Its function is as follows. May play a role in the correct development and proper functioning of the peripheral and central nervous system and be involved in cell adhesion and intercellular communication. The chain is Contactin-associated protein-like 5 (CNTNAP5) from Homo sapiens (Human).